Consider the following 128-residue polypeptide: Anion exchange transporter (128 aa).

The Extracellular segment spans residues 1-14 (LFSFKELNEQFKRK). A helical membrane pass occupies residues 15–35 (IKVVLPVDLVLIIAASFACYC). Topologically, residues 36-66 (TNMENTYGLEVVGHIPRGIPPPRAPPMNILS) are cytoplasmic. A helical transmembrane segment spans residues 67 to 87 (AVITEAFGVALVGYAASLALA). Over 88-103 (QGSAKKFKYSVDDNQE) the chain is Extracellular. A helical membrane pass occupies residues 104 to 124 (FLAHGLSNVISSFLFCIPSAA). Over 125–128 (AMGR) the chain is Cytoplasmic.

Belongs to the SLC26A/SulP transporter (TC 2.A.53) family. Expressed in gastric epithelium, predominantly in the gastric parietal cells but also at lower levels in mucosal cells.

The protein resides in the basolateral cell membrane. Its subcellular location is the recycling endosome membrane. It is found in the apical cell membrane. The protein localises to the lateral cell membrane. It carries out the reaction chloride(in) = chloride(out). The enzyme catalyses iodide(out) = iodide(in). It catalyses the reaction bromide(in) = bromide(out). The catalysed reaction is oxalate(in) = oxalate(out). It carries out the reaction nitrate(in) = nitrate(out). The enzyme catalyses sulfate(in) = sulfate(out). It catalyses the reaction D-gluconate(in) = D-gluconate(out). The catalysed reaction is thiocyanate(in) = thiocyanate(out). It carries out the reaction hydrogencarbonate(in) = hydrogencarbonate(out). The enzyme catalyses hydrogencarbonate(in) + chloride(out) = hydrogencarbonate(out) + chloride(in). Acts as an anion channel mediating the transport of chloride, bromide, iodide, nitrate, sulfate, gluconate, thiocyanate, oxalate and bicarbonate ions. Its permeability towards bicarbonate is weak and increases when pH is above 7. Mediates thiocyanate transport in retinal pigment epithelium cells. Mediates iodide transport in the thyroid gland, playing an important role in the synthesis of thyroid hormones and the maintenance of thyroid function. The chain is Anion exchange transporter from Oryctolagus cuniculus (Rabbit).